Consider the following 1073-residue polypeptide: Carbamoyl phosphate synthase large chain (1073 aa).

A carboxyphosphate synthetic domain region spans residues 2–403; sequence PKRTDIKSIL…SVQKALRGLE (402 aa). The ATP site is built by arginine 129, arginine 169, glycine 175, glycine 176, glutamate 208, leucine 210, glutamate 215, glycine 241, valine 242, histidine 243, glutamine 285, and glutamate 299. Residues 133 to 328 form the ATP-grasp 1 domain; the sequence is DKAMKDIGLA…IAKIAAKLAV (196 aa). The Mg(2+) site is built by glutamine 285, glutamate 299, and asparagine 301. Positions 285, 299, and 301 each coordinate Mn(2+). The segment at 404-553 is oligomerization domain; sequence VGATGFDPKL…YSTYEEECEA (150 aa). Positions 554 to 935 are carbamoyl phosphate synthetic domain; that stretch reads NPSSREKIMI…AFAKAQLGAS (382 aa). The region spanning 678 to 869 is the ATP-grasp 2 domain; the sequence is QQMVQRLNLR…LAKVAARVMA (192 aa). Residues arginine 714, histidine 753, leucine 755, glutamate 760, glycine 785, valine 786, histidine 787, serine 788, glutamine 828, and glutamate 840 each contribute to the ATP site. Mg(2+) contacts are provided by glutamine 828, glutamate 840, and asparagine 842. Mn(2+)-binding residues include glutamine 828, glutamate 840, and asparagine 842. One can recognise an MGS-like domain in the interval 936–1073; sequence EILPTAGCAF…LQDLHAGIKA (138 aa). Positions 936 to 1073 are allosteric domain; the sequence is EILPTAGCAF…LQDLHAGIKA (138 aa).

This sequence belongs to the CarB family. In terms of assembly, composed of two chains; the small (or glutamine) chain promotes the hydrolysis of glutamine to ammonia, which is used by the large (or ammonia) chain to synthesize carbamoyl phosphate. Tetramer of heterodimers (alpha,beta)4. It depends on Mg(2+) as a cofactor. The cofactor is Mn(2+).

It catalyses the reaction hydrogencarbonate + L-glutamine + 2 ATP + H2O = carbamoyl phosphate + L-glutamate + 2 ADP + phosphate + 2 H(+). The catalysed reaction is hydrogencarbonate + NH4(+) + 2 ATP = carbamoyl phosphate + 2 ADP + phosphate + 2 H(+). The protein operates within amino-acid biosynthesis; L-arginine biosynthesis; carbamoyl phosphate from bicarbonate: step 1/1. It participates in pyrimidine metabolism; UMP biosynthesis via de novo pathway; (S)-dihydroorotate from bicarbonate: step 1/3. Large subunit of the glutamine-dependent carbamoyl phosphate synthetase (CPSase). CPSase catalyzes the formation of carbamoyl phosphate from the ammonia moiety of glutamine, carbonate, and phosphate donated by ATP, constituting the first step of 2 biosynthetic pathways, one leading to arginine and/or urea and the other to pyrimidine nucleotides. The large subunit (synthetase) binds the substrates ammonia (free or transferred from glutamine from the small subunit), hydrogencarbonate and ATP and carries out an ATP-coupled ligase reaction, activating hydrogencarbonate by forming carboxy phosphate which reacts with ammonia to form carbamoyl phosphate. The sequence is that of Carbamoyl phosphate synthase large chain from Pseudomonas aeruginosa (strain ATCC 15692 / DSM 22644 / CIP 104116 / JCM 14847 / LMG 12228 / 1C / PRS 101 / PAO1).